Consider the following 329-residue polypeptide: Acetyl-coenzyme A carboxylase carboxyl transferase subunit alpha (329 aa).

Residues 40–294 form the CoA carboxyltransferase C-terminal domain; the sequence is QLETLAARRR…KTSILRHLTE (255 aa).

Belongs to the AccA family. In terms of assembly, acetyl-CoA carboxylase is a heterohexamer composed of biotin carboxyl carrier protein (AccB), biotin carboxylase (AccC) and two subunits each of ACCase subunit alpha (AccA) and ACCase subunit beta (AccD).

Its subcellular location is the cytoplasm. It carries out the reaction N(6)-carboxybiotinyl-L-lysyl-[protein] + acetyl-CoA = N(6)-biotinyl-L-lysyl-[protein] + malonyl-CoA. It functions in the pathway lipid metabolism; malonyl-CoA biosynthesis; malonyl-CoA from acetyl-CoA: step 1/1. In terms of biological role, component of the acetyl coenzyme A carboxylase (ACC) complex. First, biotin carboxylase catalyzes the carboxylation of biotin on its carrier protein (BCCP) and then the CO(2) group is transferred by the carboxyltransferase to acetyl-CoA to form malonyl-CoA. This Prochlorococcus marinus (strain SARG / CCMP1375 / SS120) protein is Acetyl-coenzyme A carboxylase carboxyl transferase subunit alpha.